Here is a 203-residue protein sequence, read N- to C-terminus: Ribonuclease HII (203 aa).

One can recognise an RNase H type-2 domain in the interval 18-203 (GHYAGVDEVG…SFRPVREALA (186 aa)). A divalent metal cation-binding residues include Asp-24, Glu-25, and Asp-116.

Belongs to the RNase HII family. The cofactor is Mn(2+). Mg(2+) serves as cofactor.

It is found in the cytoplasm. The enzyme catalyses Endonucleolytic cleavage to 5'-phosphomonoester.. Its function is as follows. Endonuclease that specifically degrades the RNA of RNA-DNA hybrids. The polypeptide is Ribonuclease HII (Shewanella halifaxensis (strain HAW-EB4)).